Here is a 570-residue protein sequence, read N- to C-terminus: Small ribosomal subunit protein uS2c (570 aa).

An N-terminal extension region spans residues 1-306 (MLNKKPPYLI…IKLNPLSTPQ (306 aa)). 2 TRAM domains span residues 28 to 89 (KLIP…KLIK) and 104 to 169 (ALTP…VATV).

Belongs to the universal ribosomal protein uS2 family.

It localises to the plastid. It is found in the chloroplast. The chain is Small ribosomal subunit protein uS2c (rps2-1) from Chlamydomonas reinhardtii (Chlamydomonas smithii).